The chain runs to 594 residues: KIF-binding protein (594 aa).

The protein belongs to the KIF-binding protein family.

The protein localises to the cytoplasm. The protein resides in the cytoskeleton. Its function is as follows. Activator of KIF1B plus-end-directed microtubule motor activity. Required for organization of axonal microtubules, and axonal outgrowth and maintenance during peripheral and central nervous system development. This chain is KIF-binding protein (Kifbp), found in Gallus gallus (Chicken).